The chain runs to 229 residues: Putative N-acetylmannosamine-6-phosphate 2-epimerase (229 aa).

The protein belongs to the NanE family.

It catalyses the reaction an N-acyl-D-glucosamine 6-phosphate = an N-acyl-D-mannosamine 6-phosphate. It participates in amino-sugar metabolism; N-acetylneuraminate degradation; D-fructose 6-phosphate from N-acetylneuraminate: step 3/5. In terms of biological role, converts N-acetylmannosamine-6-phosphate (ManNAc-6-P) to N-acetylglucosamine-6-phosphate (GlcNAc-6-P). In Shigella flexneri serotype 5b (strain 8401), this protein is Putative N-acetylmannosamine-6-phosphate 2-epimerase.